The sequence spans 341 residues: MRRQPPRPRNSPPQSHSSPSSSSSEFEFNISISPRKASSSLCPADELFYKGQLLPLQLSPRLSLVRTLGSSTSSSDYTSSSSSSVATSAARDSTESNSSTDSTASFPLLHPPPLDCCDSSRPSSVTDDEDFFFKPPKNKSSSGGFSLSRFSSVFKKDPKTNLHHHSSSSSTATTAAAPSSVKRMSSTAKEVIRKYMKKVKPLYEKLSPKQSSNIKTESSSSLKDSGNNIRGTTTVTTVTAAPTVVSSGGGLSISFSGNLMKYTKRGRCAASCPSSMRSSPNHSGVLTRGGFPVHQGSCSSSSSNNNSVSSSMEELQSAIQGAIAHCKNSMLQKNLVSSLEI.

Disordered regions lie at residues 1–29, 67–122, 158–185, 206–230, and 288–310; these read MRRQ…FEFN, TLGS…SSRP, PKTN…KRMS, LSPK…NNIR, and RGGF…SVSS. Composition is skewed to low complexity over residues 12–29, 67–108, and 167–180; these read PPQS…FEFN, TLGS…SFPL, and SSSS…APSS. A compositionally biased stretch (polar residues) spans 208–230; it reads PKQSSNIKTESSSSLKDSGNNIR. The segment covering 297–310 has biased composition (low complexity); it reads SCSSSSSNNNSVSS.

As to quaternary structure, a C-terminus-derived peptide binds BRI1 in vitro.

The protein localises to the cell membrane. May negatively regulate brassinosteroid signaling. The protein is Probable membrane-associated kinase regulator 1 (MAKR1) of Arabidopsis thaliana (Mouse-ear cress).